The following is a 239-amino-acid chain: MTNPVIIALDFPNWQKTDQFLQQFPKDEALFVKIGMELFYQEGPQLIKTLKARDYRIFLDLKLYDIPNTVQSAMTVIGQLGVDYTTIHAAGGQTMLQAGAAGLKAGAKQANVKPAKLLAITQLTSTNEAQMQQEQLVSVSLPESVAHYAQLAQQSDCDGVICSAQEITTIKSKTATDFLCVTPGIRPATSQNNDQKRAVTPLEAAQMHSNGIVVGRPITQASDPYQAYQAIKSEWESFK.

Substrate-binding positions include Asp10, Lys33, 60-69, Thr124, Arg186, Gln195, Gly215, and Arg216; that span reads DLKLYDIPNT. The Proton donor role is filled by Lys62.

The protein belongs to the OMP decarboxylase family. Type 1 subfamily. As to quaternary structure, homodimer.

The catalysed reaction is orotidine 5'-phosphate + H(+) = UMP + CO2. It participates in pyrimidine metabolism; UMP biosynthesis via de novo pathway; UMP from orotate: step 2/2. Its function is as follows. Catalyzes the decarboxylation of orotidine 5'-monophosphate (OMP) to uridine 5'-monophosphate (UMP). This chain is Orotidine 5'-phosphate decarboxylase, found in Latilactobacillus sakei subsp. sakei (strain 23K) (Lactobacillus sakei subsp. sakei).